Reading from the N-terminus, the 181-residue chain is MSIEQLKDQIPDFAKDVRLNLSSMASDETLSPQAKYGLFVACAIATRNPMVMAAFEAVAAAQLSATALAAAKSAAAIMAMNNVYYRFVHLASNKEYATMPARLRMNVIANPGVDKADFELWSLAVSAINGCGTCIDAHEKVLQEAAVPAASIQTAVRFAAIIQSVAVAIEAAGVTVALAAE.

Cysteine 131 acts as the Proton donor in catalysis. A disulfide bond links cysteine 131 and cysteine 134. The active-site Cysteine sulfenic acid (-SOH) intermediate is the cysteine 134.

It belongs to the AhpD family.

The catalysed reaction is N(6)-[(R)-dihydrolipoyl]-L-lysyl-[lipoyl-carrier protein] + a hydroperoxide = N(6)-[(R)-lipoyl]-L-lysyl-[lipoyl-carrier protein] + an alcohol + H2O. Its function is as follows. Antioxidant protein with alkyl hydroperoxidase activity. Required for the reduction of the AhpC active site cysteine residues and for the regeneration of the AhpC enzyme activity. This Bradyrhizobium sp. (strain ORS 278) protein is Alkyl hydroperoxide reductase AhpD.